The chain runs to 234 residues: Zein-alpha GZ19AB11 (234 aa).

Residues 1 to 21 (MAAKIFCLLMLLGLSASAATA) form the signal peptide.

Belongs to the zein family.

In terms of biological role, zeins are major seed storage proteins. This chain is Zein-alpha GZ19AB11, found in Zea mays (Maize).